A 632-amino-acid chain; its full sequence is tRNA uridine 5-carboxymethylaminomethyl modification enzyme MnmG (632 aa).

Residue Gly-15 to Gly-20 coordinates FAD. Positions Pro-205–Tyr-231 are disordered. Basic and acidic residues predominate over residues Lys-216–His-228. Gly-276–Phe-290 serves as a coordination point for NAD(+).

It belongs to the MnmG family. As to quaternary structure, homodimer. Heterotetramer of two MnmE and two MnmG subunits. The cofactor is FAD.

The protein localises to the cytoplasm. In terms of biological role, NAD-binding protein involved in the addition of a carboxymethylaminomethyl (cmnm) group at the wobble position (U34) of certain tRNAs, forming tRNA-cmnm(5)s(2)U34. The chain is tRNA uridine 5-carboxymethylaminomethyl modification enzyme MnmG from Lactobacillus johnsonii (strain CNCM I-12250 / La1 / NCC 533).